A 345-amino-acid polypeptide reads, in one-letter code: Nuclear hormone receptor family nhr-176 (345 aa).

The nuclear receptor DNA-binding region spans 7 to 82 (IQPCLVCGQS…AGMLEKMVFS (76 aa)). The NR C4-type zinc finger occupies 10–30 (CLVCGQSSNSILFGAPSCRAC). An NR C4-type; degenerate zinc finger spans residues 46-65 (NNCLGECSFAKKSMKPCQSC). The 251-residue stretch at 92–342 (FEKSILEELE…CPLYAISTNS (251 aa)) folds into the NR LBD domain. The interval 331-342 (SGCPLYAISTNS) is AF-2.

The protein resides in the nucleus. Nuclear hormone receptor. Binds to xenobiotic ligand thiabendazole (TBZ), in vitro. Involved in the up-regulation of phase I detoxification genes, such as probable cytochrome P450 cyp-35d1, in response to TBZ. This Caenorhabditis elegans protein is Nuclear hormone receptor family nhr-176.